Consider the following 522-residue polypeptide: Glucans biosynthesis protein G (522 aa).

An N-terminal signal peptide occupies residues 1-33; the sequence is MPNNKFFVKSSKASLRWLGATVLLTLYALPSWA.

This sequence belongs to the OpgD/OpgG family.

The protein localises to the periplasm. It participates in glycan metabolism; osmoregulated periplasmic glucan (OPG) biosynthesis. Its function is as follows. Involved in the biosynthesis of osmoregulated periplasmic glucans (OPGs). The chain is Glucans biosynthesis protein G from Sodalis glossinidius (strain morsitans).